The chain runs to 333 residues: MKGKLLKGVLSFGIGLGVLYGGSSVQADTSTDQNNTLKVMTHNVYMLSTNLYPNWGQSQRADLIGAADYIKNQDVVILNEVFDNSASDRLLGNLKKEYPNQTAVLGRSNGNEWDKTLGSYSSSTPEDGGVAIVSKWPIVEKIQYVFAKGCGPDNLSNKGFVYTKIKKNDRFVHVIGTHLQAEDSMCGKTSPASVRTNQLKEIQDFIKNKNIPNDEYVLFGGDMNVNKINAENNSDSEYASMFKTLHASIPSYTGHTATWDATTNSIAKYNFPDSPAEYLDYIIASKDHANPSFIENKVLQPKSPQWTVTSWLKKYTYDDYSDHYPVAATISMK.

The signal sequence occupies residues 1 to 27 (MKGKLLKGVLSFGIGLGVLYGGSSVQA). A disulfide bridge connects residues Cys-150 and Cys-186.

It belongs to the neutral sphingomyelinase family. Mg(2+) is required as a cofactor.

It localises to the secreted. The catalysed reaction is a sphingomyelin + H2O = phosphocholine + an N-acylsphing-4-enine + H(+). Activated by cobalt and manganese ions. In terms of biological role, required, with sphingomyelinase, to effect target cell lysis (hemolysis). The chain is Sphingomyelinase C (sph) from Bacillus cereus.